Consider the following 879-residue polypeptide: Beta-mannosidase (879 aa).

The first 17 residues, 1 to 17 (MLLRLLLLLAPCGAGFA), serve as a signal peptide directing secretion. N-linked (GlcNAc...) asparagine glycosylation is found at N35 and N77. C167 and C176 are oxidised to a cystine. 190-192 (WDW) contacts substrate. An N-linked (GlcNAc...) asparagine glycan is attached at N297. N456 lines the substrate pocket. The Proton donor role is filled by E457. 3 cysteine pairs are disulfide-bonded: C540-C629, C732-C761, and C764-C769. E554 functions as the Nucleophile in the catalytic mechanism. N803 carries N-linked (GlcNAc...) asparagine glycosylation.

Belongs to the glycosyl hydrolase 2 family. Monomer. N-glycosylated. In terms of tissue distribution, detected in kidney (at protein level). Found in spleen and to a lesser extent in liver. Not detected in kidney or brain.

It localises to the lysosome. The enzyme catalyses Hydrolysis of terminal, non-reducing beta-D-mannose residues in beta-D-mannosides.. The protein operates within glycan metabolism; N-glycan degradation. Its function is as follows. Exoglycosidase that cleaves the single beta-linked mannose residue from the non-reducing end of all N-linked glycoprotein oligosaccharides. The protein is Beta-mannosidase (MANBA) of Capra hircus (Goat).